A 667-amino-acid polypeptide reads, in one-letter code: Leucine-rich repeat-containing protein 43 (667 aa).

Over residues 1 to 11 the composition is skewed to polar residues; it reads METSESSTSDY. A disordered region spans residues 1–24; sequence METSESSTSDYRQTEGEGEGVPGT. LRR repeat units follow at residues 148–169, 170–191, 194–213, and 221–242; these read KLEE…NLPP, TLKV…CSAP, RLQH…ESLY, and QLVS…ILGL. An LRRCT domain is found at 256-294; the sequence is NPLSLVPYYRGFTIDSLAHLCVLDDITVSPNEKHQFRGL. Disordered stretches follow at residues 374 to 407, 533 to 570, and 616 to 640; these read FSGT…TEEM, ESPL…RQDP, and SKKV…SGYQ. A compositionally biased stretch (acidic residues) spans 377–386; it reads TDEEDQQEDP. The span at 390–399 shows a compositional bias: basic residues; the sequence is RHRHRGRQRF. Residues 540 to 553 show a composition bias toward basic and acidic residues; the sequence is KGKDNNKKKEPAKD. Residues 617 to 627 are compositionally biased toward basic residues; that stretch reads KKVKKSLKKDR.

The chain is Leucine-rich repeat-containing protein 43 (Lrrc43) from Mus musculus (Mouse).